Reading from the N-terminus, the 227-residue chain is Endo-1,4-beta-xylanase 11A (227 aa).

The signal sequence occupies residues 1–36 (MVSASSLLLAASAIAGVFSAPAAAPVSENLNVLQER). The region spanning 37 to 227 (ALTSSATGTS…SSGSASITVS (191 aa)) is the GH11 domain. Positions 112 to 136 (VYGWTTSPLIEYYIVEDFGTYDPSS) are necrosis inducing domain. E122 (nucleophile) is an active-site residue. The active-site Proton donor is E214.

The protein belongs to the glycosyl hydrolase 11 (cellulase G) family.

It localises to the secreted. The enzyme catalyses Endohydrolysis of (1-&gt;4)-beta-D-xylosidic linkages in xylans.. The protein operates within glycan degradation; xylan degradation. Its activity is regulated as follows. Significantly inhibited by the wheat xylanase inhibiting protein I (XIP-I) and the proteinaceous endoxylanase Triticum aestivum xylanase inhibitors I (TAXI-I), whereas no inhibition is detected with TAXI-II. Endo-1,4-beta-xylanase involved in the hydrolysis of xylan, a major structural heterogeneous polysaccharide found in plant biomass representing the second most abundant polysaccharide in the biosphere, after cellulose. Required for plant infection and the appearance of secondary lesions. Is able to induce necrosis on leaves, seedling growth inhibition, induction of a ROS burst, electrolyte leakage, cytoplasm shrinkage, autofluorescence, cell death, and induction of defense genes, and this abilities are independent of the catalytic activity. Only exhibits elicitor activity in certain plants such as tomato, but not in N.benthamiana. This Botryotinia fuckeliana (strain B05.10) (Noble rot fungus) protein is Endo-1,4-beta-xylanase 11A.